The following is a 123-amino-acid chain: ATP synthase epsilon chain (123 aa).

The protein belongs to the ATPase epsilon chain family. In terms of assembly, F-type ATPases have 2 components, CF(1) - the catalytic core - and CF(0) - the membrane proton channel. CF(1) has five subunits: alpha(3), beta(3), gamma(1), delta(1), epsilon(1). CF(0) has three main subunits: a, b and c.

It localises to the cell inner membrane. In terms of biological role, produces ATP from ADP in the presence of a proton gradient across the membrane. The polypeptide is ATP synthase epsilon chain (Helicobacter pylori (strain Shi470)).